The chain runs to 247 residues: STING ER exit protein (247 aa).

At S127 the chain carries Phosphoserine. Residues 195-216 are a coiled coil; sequence EAREIADSYANNARIIEKQLQR. The disordered stretch occupies residues 215-247; that stretch reads QRKGGKLSDVGIKTKTEDAPPPQKKQRGTLLER.

The protein belongs to the STEEP1 family.

Its function is as follows. Molecular adapter that stimulates membrane curvature formation and subsequent endoplasmic reticulum exit site (ERES) establishment by recruiting PI3K complex I, leading to COPII vesicle-mediated transport. The polypeptide is STING ER exit protein (Drosophila melanogaster (Fruit fly)).